Here is a 309-residue protein sequence, read N- to C-terminus: Homoserine kinase (309 aa).

91-101 (PIGSGLGSSAC) is a binding site for ATP.

It belongs to the GHMP kinase family. Homoserine kinase subfamily.

The protein localises to the cytoplasm. The catalysed reaction is L-homoserine + ATP = O-phospho-L-homoserine + ADP + H(+). Its pathway is amino-acid biosynthesis; L-threonine biosynthesis; L-threonine from L-aspartate: step 4/5. Its function is as follows. Catalyzes the ATP-dependent phosphorylation of L-homoserine to L-homoserine phosphate. The protein is Homoserine kinase of Photorhabdus laumondii subsp. laumondii (strain DSM 15139 / CIP 105565 / TT01) (Photorhabdus luminescens subsp. laumondii).